The primary structure comprises 872 residues: MKQLTSAQIRQMWLDFWKSKGHAVEPSANLVPVNDPTLLWINSGVATLKKYFDGSVIPENPRITNSQKAIRTNDIENVGKTARHHTMFEMLGNFSVGDYFRDEAIEWGYELLTSPEWFDLPKDKLYMTYYPDDKDSYNRWIACGVEPSHLIPIEDNFWEIGAGPSGPDTEIFFDRGEEFDPDNIGIRLLEEDIENDRYIEIWNIVLSQFNADPAVPRSEYKELPNKNIDTGAGLERLAAVMQGAKTNFETDLFMPIIREIEKMSGKAYDPDGETLSFKVIADHIRSLAFAIGDGALPGNEGRGYVLRRLLRRAVMHGRRLGISDAFLYKLVPTVGQIMESYYPEVLEKKDFIEKIVKREEETFARTIDAGSSMLDELLANLKKSGKDTLEGKDIFKLYDTYGFPVELTEELAEDEGFKIDHEGFKAAMKEQQDRARASVVKGGSMGMQNETLANITEPSEFLYEAETAESRLSVIVADDARHDSVNSGQALLVFEQTPFYAEMGGQVADHGTISDAAGTTVARVVDVQRAPNGQALHTVEVEGELVVGANYKLEIDHSRRHRVMKNHTATHLLHAALHNIVGNHAVQAGSLNEQEFLRFDFTHFEAVTPEELRAIEEQVNEEIWKATPVTTIETDIDTAKSMGAMALFGEKYGKRVRVVSIGDYSVELCGGTHVANTAEIGMFKIVKEEGIGSGTRRILAVTSREAYLAYREEEDALKSIAATLKAPQLKEVPNKVASLQEQLHALQKENATLKEKAAAAAAGDVFKDVKEANGVRYIASQVEVSDAGALRTFADQWKQADYSDVLVLAAHIREKVNVLVASKSENVHAGNLIKVLAPIVSGRGGGKPNMAMAGGSDANSIQDLLSAVAEQF.

Positions 567, 571, 669, and 673 each coordinate Zn(2+).

It belongs to the class-II aminoacyl-tRNA synthetase family. Zn(2+) serves as cofactor.

It is found in the cytoplasm. The enzyme catalyses tRNA(Ala) + L-alanine + ATP = L-alanyl-tRNA(Ala) + AMP + diphosphate. Functionally, catalyzes the attachment of alanine to tRNA(Ala) in a two-step reaction: alanine is first activated by ATP to form Ala-AMP and then transferred to the acceptor end of tRNA(Ala). Also edits incorrectly charged Ser-tRNA(Ala) and Gly-tRNA(Ala) via its editing domain. The polypeptide is Alanine--tRNA ligase (Streptococcus thermophilus (strain ATCC BAA-491 / LMD-9)).